Consider the following 975-residue polypeptide: Glycine dehydrogenase (decarboxylating) (975 aa).

Lysine 723 is modified (N6-(pyridoxal phosphate)lysine).

The protein belongs to the GcvP family. In terms of assembly, the glycine cleavage system is composed of four proteins: P, T, L and H. Pyridoxal 5'-phosphate is required as a cofactor.

It carries out the reaction N(6)-[(R)-lipoyl]-L-lysyl-[glycine-cleavage complex H protein] + glycine + H(+) = N(6)-[(R)-S(8)-aminomethyldihydrolipoyl]-L-lysyl-[glycine-cleavage complex H protein] + CO2. Its function is as follows. The glycine cleavage system catalyzes the degradation of glycine. The P protein binds the alpha-amino group of glycine through its pyridoxal phosphate cofactor; CO(2) is released and the remaining methylamine moiety is then transferred to the lipoamide cofactor of the H protein. The sequence is that of Glycine dehydrogenase (decarboxylating) from Burkholderia orbicola (strain MC0-3).